We begin with the raw amino-acid sequence, 67 residues long: Protein C' (67 aa).

It belongs to the rhabdoviruses C protein family.

Its function is as follows. Seems to stimulates transcription by the viral polymerase. May play a role in viral pathogenesis or transmission by insects vectors. The polypeptide is Protein C' (P) (Vesicular stomatitis Indiana virus (strain 98COE North America) (VSIV)).